A 221-amino-acid polypeptide reads, in one-letter code: Ribosomal RNA large subunit methyltransferase E (221 aa).

S-adenosyl-L-methionine contacts are provided by G60, W62, D89, D105, and D134. The active-site Proton acceptor is K174. Positions 199-221 (KPKASRDKSSETFLLGRQLKHPG) are disordered.

This sequence belongs to the class I-like SAM-binding methyltransferase superfamily. RNA methyltransferase RlmE family.

Its subcellular location is the cytoplasm. The enzyme catalyses uridine(2552) in 23S rRNA + S-adenosyl-L-methionine = 2'-O-methyluridine(2552) in 23S rRNA + S-adenosyl-L-homocysteine + H(+). Specifically methylates the uridine in position 2552 of 23S rRNA at the 2'-O position of the ribose in the fully assembled 50S ribosomal subunit. In Ralstonia nicotianae (strain ATCC BAA-1114 / GMI1000) (Ralstonia solanacearum), this protein is Ribosomal RNA large subunit methyltransferase E.